Consider the following 130-residue polypeptide: Small ribosomal subunit protein uS8 (130 aa).

This sequence belongs to the universal ribosomal protein uS8 family. In terms of assembly, part of the 30S ribosomal subunit. Contacts proteins S5 and S12.

Its function is as follows. One of the primary rRNA binding proteins, it binds directly to 16S rRNA central domain where it helps coordinate assembly of the platform of the 30S subunit. In Shewanella sediminis (strain HAW-EB3), this protein is Small ribosomal subunit protein uS8.